A 668-amino-acid chain; its full sequence is Cyclin-dependent kinase 11.2 (668 aa).

The tract at residues Met1–Glu265 is disordered. Basic and acidic residues-rich tracts occupy residues Lys35–Asp73, Tyr85–Arg127, and Leu140–Met163. Residues Glu164 to Val181 are compositionally biased toward acidic residues. 2 stretches are compositionally biased toward basic and acidic residues: residues Asn197 to Ser212 and Pro245 to Glu265. Positions Tyr304 to Phe600 constitute a Protein kinase domain. Residues Ile310–Val318 and Lys333 contribute to the ATP site. Asp432 functions as the Proton acceptor in the catalytic mechanism.

It belongs to the protein kinase superfamily. CMGC Ser/Thr protein kinase family. CDC2/CDKX subfamily. Expressed in somatic cells and at varying levels throughout the germline (at protein level). Highly expressed in the germ line of hermaphrodites (at protein level).

The protein localises to the nucleus. The protein resides in the cytoplasm. The enzyme catalyses L-seryl-[protein] + ATP = O-phospho-L-seryl-[protein] + ADP + H(+). It carries out the reaction L-threonyl-[protein] + ATP = O-phospho-L-threonyl-[protein] + ADP + H(+). Probable cyclin-dependent kinase whose activity is most likely regulated by the cyclin cyl-1/Cylin-L. Acts partially redundantly with cdk-11.1 to ensure embryonic viability. In contrast to cdk-11.1, not essential for male and female fertility. This Caenorhabditis elegans protein is Cyclin-dependent kinase 11.2.